The following is a 358-amino-acid chain: Fructose-bisphosphate aldolase 2, cytoplasmic (358 aa).

Residue Arg39 participates in substrate binding. Glu183 serves as the catalytic Proton acceptor. The Schiff-base intermediate with dihydroxyacetone-P role is filled by Lys225. Substrate-binding positions include 266 to 268 (SGG) and Arg298.

It belongs to the class I fructose-bisphosphate aldolase family. Homotetramer.

The protein localises to the cytoplasm. Its subcellular location is the cytosol. It carries out the reaction beta-D-fructose 1,6-bisphosphate = D-glyceraldehyde 3-phosphate + dihydroxyacetone phosphate. It participates in carbohydrate degradation; glycolysis; D-glyceraldehyde 3-phosphate and glycerone phosphate from D-glucose: step 4/4. Functionally, fructose-bisphosphate aldolase that plays a key role in glycolysis and gluconeogenesis. This chain is Fructose-bisphosphate aldolase 2, cytoplasmic, found in Oryza sativa subsp. japonica (Rice).